Reading from the N-terminus, the 630-residue chain is 1-deoxy-D-xylulose-5-phosphate synthase (630 aa).

Thiamine diphosphate contacts are provided by residues histidine 72 and glycine 113–serine 115. Residue aspartate 144 participates in Mg(2+) binding. Thiamine diphosphate-binding positions include glycine 145–alanine 146, asparagine 173, tyrosine 284, and glutamate 367. Asparagine 173 lines the Mg(2+) pocket.

It belongs to the transketolase family. DXPS subfamily. In terms of assembly, homodimer. It depends on Mg(2+) as a cofactor. Thiamine diphosphate serves as cofactor.

The enzyme catalyses D-glyceraldehyde 3-phosphate + pyruvate + H(+) = 1-deoxy-D-xylulose 5-phosphate + CO2. The protein operates within metabolic intermediate biosynthesis; 1-deoxy-D-xylulose 5-phosphate biosynthesis; 1-deoxy-D-xylulose 5-phosphate from D-glyceraldehyde 3-phosphate and pyruvate: step 1/1. Catalyzes the acyloin condensation reaction between C atoms 2 and 3 of pyruvate and glyceraldehyde 3-phosphate to yield 1-deoxy-D-xylulose-5-phosphate (DXP). The polypeptide is 1-deoxy-D-xylulose-5-phosphate synthase (Bacillus mycoides (strain KBAB4) (Bacillus weihenstephanensis)).